Reading from the N-terminus, the 254-residue chain is tRNA 2'-phosphotransferase 1 (254 aa).

N-acetylmethionine is present on M1. Disordered stretches follow at residues 1–30 (MNSFGGRRRETAGPKGRRAHRPPQDQDRDV) and 225–254 (RKPLSLAGNEEKEHQRDSKHSSRGRGMTQQ). Positions 233-244 (NEEKEHQRDSKH) are enriched in basic and acidic residues.

It belongs to the KptA/TPT1 family.

It catalyses the reaction 2'-phospho-[ligated tRNA] + NAD(+) = mature tRNA + ADP-alpha-D-ribose 1'',2''-cyclic phosphate + nicotinamide. Its function is as follows. Catalyzes the last step of tRNA splicing, the transfer of the splice junction 2'-phosphate from ligated tRNA to NAD to produce ADP-ribose 1''-2'' cyclic phosphate. The chain is tRNA 2'-phosphotransferase 1 (TRPT1) from Bos taurus (Bovine).